A 419-amino-acid chain; its full sequence is Transcription termination factor Rho (419 aa).

The region spanning 48 to 123 (EISGDGVLEI…LKVDSINFDR (76 aa)) is the Rho RNA-BD domain. 3 RNA-binding regions span residues 61–66 (GFGFLR), 78–80 (DIY), and 108–110 (ERY). Residues 169–174 (GKGQRG), 181–186 (KAGKTI), and Arg-212 each bind ATP. Residues 284–288 (VLTGG) form an RNA-binding 2 region.

Belongs to the Rho family. In terms of assembly, homohexamer. The homohexamer assembles into an open ring structure.

In terms of biological role, facilitates transcription termination by a mechanism that involves Rho binding to the nascent RNA, activation of Rho's RNA-dependent ATPase activity, and release of the mRNA from the DNA template. The polypeptide is Transcription termination factor Rho (Pseudomonas aeruginosa (strain ATCC 15692 / DSM 22644 / CIP 104116 / JCM 14847 / LMG 12228 / 1C / PRS 101 / PAO1)).